Here is a 142-residue protein sequence, read N- to C-terminus: Large ribosomal subunit protein uL13 (142 aa).

This sequence belongs to the universal ribosomal protein uL13 family. As to quaternary structure, part of the 50S ribosomal subunit.

This protein is one of the early assembly proteins of the 50S ribosomal subunit, although it is not seen to bind rRNA by itself. It is important during the early stages of 50S assembly. The chain is Large ribosomal subunit protein uL13 from Pseudomonas syringae pv. tomato (strain ATCC BAA-871 / DC3000).